A 728-amino-acid polypeptide reads, in one-letter code: Microtubule-associated protein VP5 (728 aa).

This sequence belongs to the reoviridae microtubule-associated protein family.

It localises to the virion. The protein localises to the host cytoplasm. Its subcellular location is the host cytoskeleton. Its function is as follows. Minor inner capsid component. Displays NTPase and RNA 5'-triphosphatase (RTPase) activities. May function as a cofactor of polymerase. Associates with microtubules and plays a role in the formation, structural organization and morphology of viral inclusions, where the assembly of cores and the replication of viral RNA occur. In Aquareovirus C (isolate Golden shiner/USA/GSRV/1977) (AQRV-C), this protein is Microtubule-associated protein VP5 (S5).